Here is a 908-residue protein sequence, read N- to C-terminus: PTS system glucose-specific EIICBA component (908 aa).

The 264-residue stretch at 1–264 (MQISLVKIRN…YAPLWYTSAG (264 aa)) folds into the PTS EIIC type-1; first part domain. The next 5 membrane-spanning stretches (helical) occupy residues 31–51 (LMIP…GDAI), 71–91 (GGNV…AITF), 100–120 (FSAF…IIPV), 155–175 (VFGG…FYAI), and 189–209 (FVPI…LMVW). Residues 265–450 (GSLQEIANQQ…VSQFTVAVPS (186 aa)) form a unknown region. The 152-residue stretch at 451–602 (LNPAQYSQGK…FNLATPGRGG (152 aa)) folds into the PTS EIIC type-1; second part domain. The next 5 membrane-spanning stretches (helical) occupy residues 459–479 (GKFP…ILAA), 487–507 (ASSI…TEPF), 509–529 (FTFL…LAAV), 536–556 (LLSA…ILYG), and 571–591 (VPII…FLTI). The PTS EIIB type-1 domain occupies 631 to 713 (QIEAGMLLRA…QDIIQGKVNW (83 aa)). Cys653 (phosphocysteine intermediate; for EIIB activity) is an active-site residue. A PTS EIIA type-1 domain is found at 762 to 875 (DDTFKNRLVG…DPITPFIVMQ (114 aa)). The Tele-phosphohistidine intermediate; for EIIA activity role is filled by His815.

The protein localises to the cell membrane. It carries out the reaction N(pros)-phospho-L-histidyl-[protein] + D-glucose(out) = D-glucose 6-phosphate(in) + L-histidyl-[protein]. Its function is as follows. The phosphoenolpyruvate-dependent sugar phosphotransferase system (sugar PTS), a major carbohydrate active transport system, catalyzes the phosphorylation of incoming sugar substrates concomitantly with their translocation across the cell membrane. This system is involved in glucose transport. The polypeptide is PTS system glucose-specific EIICBA component (ptsG) (Mycoplasma genitalium (strain ATCC 33530 / DSM 19775 / NCTC 10195 / G37) (Mycoplasmoides genitalium)).